Consider the following 340-residue polypeptide: Arginase 1, mitochondrial (340 aa).

The transit peptide at 1–24 directs the protein to the mitochondrion; the sequence is MGGVAAGTRWIHHVRRLSAAKVSA. Positions 159, 183, 185, and 187 each coordinate Mn(2+). Substrate is bound by residues 185–189 and 193–195; these read HPDIY and EGN. Asp268 and Asp270 together coordinate Mn(2+). Glu311 is a binding site for substrate.

This sequence belongs to the arginase family. It depends on Mn(2+) as a cofactor.

The protein localises to the mitochondrion. It catalyses the reaction L-arginine + H2O = urea + L-ornithine. It participates in nitrogen metabolism; urea cycle; L-ornithine and urea from L-arginine: step 1/1. Its function is as follows. Catalyzes the hydrolysis of L-arginine to urea and L-ornithine. The latter can be utilized in the urea cycle or as a precursor for the synthesis of both polyamines and proline. This Oryza sativa subsp. japonica (Rice) protein is Arginase 1, mitochondrial (ARG1).